The primary structure comprises 287 residues: 2-dehydro-3-deoxyphosphooctonate aldolase (287 aa).

The protein belongs to the KdsA family.

It is found in the cytoplasm. The catalysed reaction is D-arabinose 5-phosphate + phosphoenolpyruvate + H2O = 3-deoxy-alpha-D-manno-2-octulosonate-8-phosphate + phosphate. Its pathway is carbohydrate biosynthesis; 3-deoxy-D-manno-octulosonate biosynthesis; 3-deoxy-D-manno-octulosonate from D-ribulose 5-phosphate: step 2/3. It functions in the pathway bacterial outer membrane biogenesis; lipopolysaccharide biosynthesis. In Rhodopseudomonas palustris (strain TIE-1), this protein is 2-dehydro-3-deoxyphosphooctonate aldolase.